A 360-amino-acid polypeptide reads, in one-letter code: MLVWLAEHLVKYYSGFNVFSYLTFRAIVSLLTALFLSLWMGPRVIKRLQEMSFGQVVRNDGPESHFSKRGTPTMGGIMILTSITVSVLMWAYPSNPYVWCVLFVLVGYGIVGFVDDYRKVVRKDTKGLIARWKYFWQSVIALVVAFAMYAVGKDTPATELVVPFFKDIMPQLGLLYVLLAYFVIVGTSNAVNLTDGLDGLAIMPTVFVAAGFALVAWATGNMNFANYLHIPYLRHAGELVIVCTAIVGAGLGFLWFNTYPAQVFMGDVGSLALGGALGTIAVLLRQEFLLLIMGGVFVVETLSVILQVGSFKLRGQRIFRMAPIHHHYELKGWPEPRVIVRFWIISLMLVLIGLATLKVR.

10 helical membrane-spanning segments follow: residues 18 to 38 (VFSY…FLSL), 72 to 92 (PTMG…MWAY), 94 to 114 (SNPY…VGFV), 132 to 152 (WKYF…YAVG), 168 to 188 (IMPQ…VGTS), 199 to 219 (GLAI…AWAT), 236 to 256 (AGEL…FLWF), 263 to 283 (VFMG…IAVL), 288 to 308 (FLLL…ILQV), and 338 to 358 (VIVR…ATLK).

This sequence belongs to the glycosyltransferase 4 family. MraY subfamily. Mg(2+) is required as a cofactor.

Its subcellular location is the cell inner membrane. The enzyme catalyses UDP-N-acetyl-alpha-D-muramoyl-L-alanyl-gamma-D-glutamyl-meso-2,6-diaminopimeloyl-D-alanyl-D-alanine + di-trans,octa-cis-undecaprenyl phosphate = di-trans,octa-cis-undecaprenyl diphospho-N-acetyl-alpha-D-muramoyl-L-alanyl-D-glutamyl-meso-2,6-diaminopimeloyl-D-alanyl-D-alanine + UMP. It participates in cell wall biogenesis; peptidoglycan biosynthesis. Its function is as follows. Catalyzes the initial step of the lipid cycle reactions in the biosynthesis of the cell wall peptidoglycan: transfers peptidoglycan precursor phospho-MurNAc-pentapeptide from UDP-MurNAc-pentapeptide onto the lipid carrier undecaprenyl phosphate, yielding undecaprenyl-pyrophosphoryl-MurNAc-pentapeptide, known as lipid I. This Serratia proteamaculans (strain 568) protein is Phospho-N-acetylmuramoyl-pentapeptide-transferase.